We begin with the raw amino-acid sequence, 166 residues long: Anaerobic nitrite reductase NSHB1 (166 aa).

The Globin domain occupies 13–163 (SFSEEQEALV…LVAAIKQEMK (151 aa)). A Homodimerization motif is present at residues 46–50 (EVAPS). Ser-56, Lys-70, His-74, Arg-104, Thr-108, and His-109 together coordinate heme b. Residues 116–128 (DAHFEVVKFALLD) carry the Homodimerization motif.

Belongs to the plant globin family. Homodimer. It depends on heme b as a cofactor. As to expression, expressed in coleoptiles, embryos, leaves, seminal roots and roots.

It is found in the cytoplasm. It localises to the nucleus. It carries out the reaction Fe(III)-heme b-[protein] + nitric oxide + H2O = Fe(II)-heme b-[protein] + nitrite + 2 H(+). Its activity is regulated as follows. Slowly reduced by ascorbic acid (AA); this reaction may become a source of nitric oxide (NO) during hypoxia. In terms of biological role, phytoglobin that reduces nitrite to nitric oxide under anoxic conditions (e.g. during flooding or in waterlogged soil). May not function as an oxygen storage or transport protein. Has an unusually high affinity for O(2) through a hexacoordinate heme iron because of a very low dissociation constant. The sequence is that of Anaerobic nitrite reductase NSHB1 from Oryza sativa subsp. japonica (Rice).